We begin with the raw amino-acid sequence, 401 residues long: MALVSQARSLGKYFLLFDNLLVVLGFFVVFPLISIRFVDQLGWAALVVGLALGLRQLVQQGLGIFGGAIADRFGAKPMIVTGMLMRAAGFALMAMADEPWILWLACALSGLGGTLFDPPRTALVIKLTRPHERGRFYSLLMMQDSAGAVIGALIGSWLLQYDFHFVCWTGAAIFVLAAGWNAWLLPAYRISTVRAPMKEGLMRVLRDRRFVTYVLTLTGYYMLAVQVMLMLPIVVNELAGSPAAVKWMYAIEAALSLTLLYPLARWSEKRFSLEQRLMAGLLIMTLSLFPIGMITHLQTLFMFICFFYMGSILAEPARETLGASLADSRARGSYMGFSRLGLALGGALGYTGGGWMYDTGKTLDMPELPWFLLGIIGLITLAGLYWQFNRRRIESAMLSSS.

Transmembrane regions (helical) follow at residues 13–33 (YFLL…FPLI), 34–54 (SIRF…ALGL), 99–116 (PWIL…GTLF), 139–159 (LLMM…SWLL), 165–185 (FVCW…AWLL), 214–234 (VLTL…LPIV), 243–263 (AAVK…LYPL), 277–297 (LMAG…ITHL), 299–319 (TLFM…PARE), 340–360 (LGLA…YDTG), and 368–388 (LPWF…YWQF).

The protein belongs to the major facilitator superfamily. DHA1 family. MdtH (TC 2.A.1.2.21) subfamily.

The protein localises to the cell inner membrane. The sequence is that of Multidrug resistance protein MdtH from Yersinia pseudotuberculosis serotype O:1b (strain IP 31758).